A 103-amino-acid chain; its full sequence is Large ribosomal subunit protein eL30 (103 aa).

The protein belongs to the eukaryotic ribosomal protein eL30 family.

In Methanosarcina mazei (strain ATCC BAA-159 / DSM 3647 / Goe1 / Go1 / JCM 11833 / OCM 88) (Methanosarcina frisia), this protein is Large ribosomal subunit protein eL30.